Consider the following 252-residue polypeptide: Probable endonuclease 4 (252 aa).

The Zn(2+) site is built by His-56, His-96, Glu-129, Asp-162, His-165, His-191, Asp-204, His-206, and Glu-233.

It belongs to the AP endonuclease 2 family. Requires Zn(2+) as cofactor.

The enzyme catalyses Endonucleolytic cleavage to 5'-phosphooligonucleotide end-products.. Endonuclease IV plays a role in DNA repair. It cleaves phosphodiester bonds at apurinic or apyrimidinic (AP) sites, generating a 3'-hydroxyl group and a 5'-terminal sugar phosphate. The polypeptide is Probable endonuclease 4 (Mycobacterium tuberculosis (strain ATCC 25177 / H37Ra)).